The following is a 689-amino-acid chain: Glycine--tRNA ligase beta subunit (689 aa).

It belongs to the class-II aminoacyl-tRNA synthetase family. As to quaternary structure, tetramer of two alpha and two beta subunits.

The protein localises to the cytoplasm. The catalysed reaction is tRNA(Gly) + glycine + ATP = glycyl-tRNA(Gly) + AMP + diphosphate. The polypeptide is Glycine--tRNA ligase beta subunit (Shewanella piezotolerans (strain WP3 / JCM 13877)).